Reading from the N-terminus, the 626-residue chain is Probable metalloendopeptidase G1-type (626 aa).

Zn(2+) is bound at residue H42. E45 is a catalytic residue. A Zn(2+)-binding site is contributed by H46.

Belongs to the peptidase M44 family. Zn(2+) serves as cofactor.

In terms of biological role, seems to be involved in viral proteins maturation by cleavage at Ala-Gly-|-Xaa motifs. The polypeptide is Probable metalloendopeptidase G1-type (Fowlpox virus (strain NVSL) (FPV)).